Here is a 216-residue protein sequence, read N- to C-terminus: Ras-related protein RABE1d (216 aa).

A GTP-binding site is contributed by 22–29; it reads GDSGVGKS. The Effector region motif lies at 44–52; that stretch reads FITTIGIDF. Residues 70 to 74, 128 to 131, and 159 to 160 each bind GTP; these read DTAGQ, NKAD, and SA. The disordered stretch occupies residues 196–216; the sequence is TKQDTAASSSTAEKSACCSYV. Residues 200 to 216 show a composition bias toward low complexity; the sequence is TAASSSTAEKSACCSYV. Residues Cys212 and Cys213 are each lipidated (S-geranylgeranyl cysteine).

Belongs to the small GTPase superfamily. Rab family. As to quaternary structure, interacts with PI5K2.

It localises to the golgi apparatus membrane. The protein localises to the cell membrane. Functionally, involved in membrane trafficking from the Golgi to the plasma membrane. This is Ras-related protein RABE1d (RABE1D) from Arabidopsis thaliana (Mouse-ear cress).